A 166-amino-acid polypeptide reads, in one-letter code: MDVARFLNNNAILHDDCLKSPIVCLERLATEFNAWLTSILLSLEIVFFNEAFIISVISLVILQSDWVVMLSNISPMDTVHVPAFVIILSKMLYGIAQKISSPVISPLSINLLRLFLNALFSGEKISVSIISLIVYAEKIPRVSILSKILIGSESQIMVSSPSGDPA.

This is an uncharacterized protein from Homo sapiens (Human).